A 181-amino-acid polypeptide reads, in one-letter code: MSRIKKARKPGMSSQPVVVTRNRTDRDVESRELKRKRKRKGLKAGARNAESNAEQARRNAQKKDPRIGSKKPIQLVVDAKQKTTKQERRLTNEQELAMLENDAQLMVLLDRLDSGENLGTGLQKYVDEKLARIEHLMGRLGLLDDEEPEEIEEFPEFAERKAKSDDDLLAEFDDFNMDDFK.

The interval 1–73 is disordered; that stretch reads MSRIKKARKP…DPRIGSKKPI (73 aa). Residues 22-32 show a composition bias toward basic and acidic residues; the sequence is NRTDRDVESRE. The span at 33–42 shows a compositional bias: basic residues; it reads LKRKRKRKGL. Positions 55 to 67 are enriched in basic and acidic residues; the sequence is QARRNAQKKDPRI.

The protein belongs to the YihI family. In terms of assembly, interacts with Der.

In terms of biological role, a GTPase-activating protein (GAP) that modifies Der/EngA GTPase function. May play a role in ribosome biogenesis. This Aliivibrio fischeri (strain MJ11) (Vibrio fischeri) protein is Der GTPase-activating protein YihI.